Reading from the N-terminus, the 364-residue chain is Endoglucanase A (364 aa).

Glu169 functions as the Proton donor in the catalytic mechanism. Glu293 functions as the Nucleophile in the catalytic mechanism.

The protein belongs to the glycosyl hydrolase 5 (cellulase A) family.

The protein localises to the cytoplasm. The enzyme catalyses Endohydrolysis of (1-&gt;4)-beta-D-glucosidic linkages in cellulose, lichenin and cereal beta-D-glucans.. It catalyses the reaction Endohydrolysis of (1-&gt;4)-beta-D-xylosidic linkages in xylans.. Hydrolyzes both carboxymethylcellulose and xylan. Probably has a role in hydrolyzing oligosaccharides derived from cellulose, which are transported across the cell wall. This chain is Endoglucanase A (celA), found in Ruminococcus albus.